The chain runs to 343 residues: Ribosomal RNA small subunit methyltransferase C (343 aa).

It belongs to the methyltransferase superfamily. RsmC family. In terms of assembly, monomer.

It is found in the cytoplasm. It carries out the reaction guanosine(1207) in 16S rRNA + S-adenosyl-L-methionine = N(2)-methylguanosine(1207) in 16S rRNA + S-adenosyl-L-homocysteine + H(+). Its function is as follows. Specifically methylates the guanine in position 1207 of 16S rRNA in the 30S particle. In Escherichia coli O81 (strain ED1a), this protein is Ribosomal RNA small subunit methyltransferase C.